The sequence spans 222 residues: Hexitol phosphatase B (222 aa).

Residue Asp13 is the Nucleophile of the active site. Asp13 and Asp15 together coordinate a divalent metal cation. Residues 13 to 15 (DMD), 115 to 116 (SA), and Lys148 each bind substrate. Catalysis depends on Asp15, which acts as the Proton donor. Asp173 is an a divalent metal cation binding site.

This sequence belongs to the HAD-like hydrolase superfamily. CbbY/CbbZ/Gph/YieH family. It depends on Mg(2+) as a cofactor. Requires Mn(2+) as cofactor. The cofactor is Co(2+). Zn(2+) serves as cofactor.

The enzyme catalyses sugar phosphate + H2O = sugar + phosphate.. It carries out the reaction 2-deoxy-D-glucose 6-phosphate + H2O = 2-deoxy-D-glucose + phosphate. It catalyses the reaction D-mannitol 1-phosphate + H2O = D-mannitol + phosphate. The catalysed reaction is D-sorbitol 6-phosphate + H2O = D-sorbitol + phosphate. In terms of biological role, sugar-phosphate phosphohydrolase that catalyzes the dephosphorylation of D-mannitol 1-phosphate and D-sorbitol 6-phosphate. Also catalyzes the dephosphorylation of 2-deoxyglucose 6-phosphate (2dGlu6P); this is a biologically important activity in vivo since it contributes to the elimination of this toxic compound and plays an important role in the resistance of E.coli to 2-deoxyglucose. The sequence is that of Hexitol phosphatase B from Escherichia coli O157:H7.